A 326-amino-acid polypeptide reads, in one-letter code: Putative nickel insertion protein (326 aa).

This sequence belongs to the LarC family.

The polypeptide is Putative nickel insertion protein (Enterococcus faecalis (strain ATCC 700802 / V583)).